The chain runs to 633 residues: Basic helix-loop-helix ARNT-like protein 1 (633 aa).

The disordered stretch occupies residues 1–65; that stretch reads MADQRMDISS…GMDTDKDDQH (65 aa). Serine 17 carries the post-translational modification Phosphoserine; by GSK3-beta. Polar residues predominate over residues 24–33; it reads ISSSLSTSGV. The Nuclear localization signal signature appears at 36–41; it reads NRKRKG. A bHLH domain is found at 79–132; sequence NAREAHSQIEKRRRDKMNSFIDELASLVPTCNAMSRKLDKLTVLRMAVQHMKTL. At serine 85 the chain carries Phosphoserine. At serine 97 the chain carries Phosphoserine; by CK2. The Nuclear export signal 1 motif lies at 149-159; it reads LSDDELKHLIL. In terms of domain architecture, PAS 1 spans 150-222; sequence SDDELKHLIL…EQLSSSDTAP (73 aa). Lysine 259 participates in a covalent cross-link: Glycyl lysine isopeptide (Lys-Gly) (interchain with G-Cter in SUMO2 and SUMO3). Residue lysine 266 forms a Glycyl lysine isopeptide (Lys-Gly) (interchain with G-Cter in SUMO) linkage. One can recognise a PAS 2 domain in the interval 333–403; it reads PQPVNGEIRV…ECHRQVLQTR (71 aa). Residues 368–376 carry the Nuclear export signal 2 motif; sequence LAYLPQELL. The PAC domain maps to 408-451; it reads TNCYKFKIKDGSFITLRSRWFSFMNPWTKEVEYIVSTNTVVSTS. Disordered stretches follow at residues 469 to 499 and 518 to 578; these read SMDS…RAGA and GSSP…DNSS. Low complexity predominate over residues 518–528; the sequence is GSSPSSCGSSP. Position 545 is an N6-acetyllysine (lysine 545). The segment covering 563 to 578 has biased composition (polar residues); it reads GQIQDSSGYPYSDNSS.

In terms of assembly, component of the circadian clock oscillator which includes the CRY1/2 proteins, CLOCK or NPAS2, BMAL1 or BMAL2, CSNK1D and/or CSNK1E, TIMELESS and the PER1/2/3 proteins. Forms a heterodimer with CLOCK. The CLOCK-BMAL1 heterodimer is required for E-box-dependent transactivation, for CLOCK nuclear translocation and degradation, and, for phosphorylation of both CLOCK and BMAL1. Interacts with PER1, PER2, CRY1 and CRY2 and this interaction requires a translocation to the nucleus. Interaction of the CLOCK-BMAL1 heterodimer with PER or CRY inhibits transcription activation. Interacts with NPAS2. Ubiquitinated, leading to its proteasomal degradation. Deubiquitinated by USP9X. In terms of processing, O-glycosylated; contains O-GlcNAc. O-glycosylation by OGT prevents protein degradation by inhibiting ubiquitination. It also stabilizes the CLOCK-BMAL1 heterodimer thereby increasing CLOCK-BMAL1-mediated transcription of genes in the negative loop of the circadian clock such as PER1/2/3 and CRY1/2. Post-translationally, acetylated on Lys-545 by CLOCK during the repression phase of the circadian cycle. Acetylation facilitates recruitment of CRY1 protein and initiates the repression phase of the circadian cycle. Acetylated at Lys-545 by KAT5 during the activation phase of the cycle, leading to recruitment of the positive transcription elongation factor b (P-TEFb) and BRD4, followed by productive elongation of circadian transcripts. Deacetylated by SIRT1, which may result in decreased protein stability. Phosphorylated upon dimerization with CLOCK. Phosphorylation enhances the transcriptional activity, alters the subcellular localization and decreases the stability of the CLOCK-BMAL1 heterodimer by promoting its degradation. Phosphorylation shows circadian variations in the liver with a peak between CT10 to CT14. Phosphorylation at Ser-97 by CK2 is essential for its nuclear localization, its interaction with CLOCK and controls CLOCK nuclear entry. Dephosphorylation at Ser-85 is important for dimerization with CLOCK and transcriptional activity. In terms of processing, sumoylated on Lys-266 upon dimerization with CLOCK. Predominantly conjugated to poly-SUMO2/3 rather than SUMO1 and the level of these conjugates undergo rhythmic variation, peaking at CT9-CT12. Sumoylation localizes it exclusively to the PML body and promotes its ubiquitination in the PML body, ubiquitin-dependent proteasomal degradation and the transcriptional activity of the CLOCK-BMAL1 heterodimer. Post-translationally, undergoes lysosome-mediated degradation in a time-dependent manner in the liver. As to expression, expressed in pineal gland and retina.

The protein resides in the nucleus. The protein localises to the cytoplasm. Its subcellular location is the PML body. Transcriptional activator which forms a core component of the circadian clock. The circadian clock, an internal time-keeping system, regulates various physiological processes through the generation of approximately 24 hour circadian rhythms in gene expression, which are translated into rhythms in metabolism and behavior. It is derived from the Latin roots 'circa' (about) and 'diem' (day) and acts as an important regulator of a wide array of physiological functions including metabolism, sleep, body temperature, blood pressure, endocrine, immune, cardiovascular, and renal function. Consists of two major components: the central clock, residing in the suprachiasmatic nucleus (SCN) of the brain, and the peripheral clocks that are present in nearly every tissue and organ system. Both the central and peripheral clocks can be reset by environmental cues, also known as Zeitgebers (German for 'timegivers'). The predominant Zeitgeber for the central clock is light, which is sensed by retina and signals directly to the SCN. The central clock entrains the peripheral clocks through neuronal and hormonal signals, body temperature and feeding-related cues, aligning all clocks with the external light/dark cycle. Circadian rhythms allow an organism to achieve temporal homeostasis with its environment at the molecular level by regulating gene expression to create a peak of protein expression once every 24 hours to control when a particular physiological process is most active with respect to the solar day. Transcription and translation of core clock components (CLOCK, NPAS2, BMAL1, BMAL2, PER1, PER2, PER3, CRY1 and CRY2) plays a critical role in rhythm generation, whereas delays imposed by post-translational modifications (PTMs) are important for determining the period (tau) of the rhythms (tau refers to the period of a rhythm and is the length, in time, of one complete cycle). A diurnal rhythm is synchronized with the day/night cycle, while the ultradian and infradian rhythms have a period shorter and longer than 24 hours, respectively. Disruptions in the circadian rhythms contribute to the pathology of cardiovascular diseases, cancer, metabolic syndromes and aging. A transcription/translation feedback loop (TTFL) forms the core of the molecular circadian clock mechanism. Transcription factors, CLOCK or NPAS2 and BMAL1 or BMAL2, form the positive limb of the feedback loop, act in the form of a heterodimer and activate the transcription of core clock genes and clock-controlled genes (involved in key metabolic processes), harboring E-box elements (5'-CACGTG-3') within their promoters. The core clock genes: PER1/2/3 and CRY1/2 which are transcriptional repressors form the negative limb of the feedback loop and interact with the CLOCK|NPAS2-BMAL1|BMAL2 heterodimer inhibiting its activity and thereby negatively regulating their own expression. This heterodimer also activates nuclear receptors NR1D1/2 and RORA/B/G, which form a second feedback loop and which activate and repress BMAL1 transcription, respectively. The preferred binding motif for the CLOCK-BMAL1 heterodimer is 5'-CACGTGA-3', which contains a flanking adenine nucleotide at the 3-prime end of the canonical 6-nucleotide E-box sequence. CLOCK specifically binds to the half-site 5'-CAC-3', while BMAL1 binds to the half-site 5'-GTGA-3'. Essential for the rhythmic interaction of CLOCK with ASS1 and plays a critical role in positively regulating CLOCK-mediated acetylation of ASS1. Plays a role in protecting against lethal sepsis by limiting the expression of immune checkpoint protein CD274 in macrophages in a PKM2-dependent manner. This is Basic helix-loop-helix ARNT-like protein 1 (BMAL1) from Gallus gallus (Chicken).